Consider the following 491-residue polypeptide: MANYFNTLNLRQQLAQLGKCRFMGRDEFADGASYLQGKKVVIVGCGAQGLNQGLNMRDSGLDISYALRKEAITEKRASWRKATENGFKVGTYEELIPQADLVVNLTPDKQHSDVVRTVQPLMKDGAALGYSHGFNIVEVGEQIRKDITVVMVAPKCPGTEVREEYKRGFGVPTLIAVHPENDPKGEGMAIAKAWAAATGGHRAGVLESSFVAEVKSDLMGEQTILCGMLQAGSLLCFDKLVEEGTDPAYAEKLIQFGWETITEALKQGGITLMMDRLSNPAKLRAYALSEQLKEIMAPLFQKHMDDIISGEFSSGMMADWANDDKKLLTWREETGKTAFETAPQYEGKIGEQEYFDKGVLMIAMVKAGVELAFETMVDSGIIEESAYYESLHELPLIANTIARKRLYEMNVVISDTAEYGNYLFSYACVPLLKPFMAELQPGDLGKAIPEGAVDNAQLRDVNEAIRSHAIEQVGKKLRGYMTDMKRIAVAG.

The region spanning alanine 15–serine 208 is the KARI N-terminal Rossmann domain. NADP(+)-binding positions include cysteine 45 to glutamine 48, arginine 68, arginine 76, serine 78, and aspartate 108 to glutamine 110. Histidine 132 is a catalytic residue. Position 158 (glycine 158) interacts with NADP(+). KARI C-terminal knotted domains lie at serine 209–glutamine 344 and tyrosine 345–methionine 484. Aspartate 217, glutamate 221, glutamate 389, and glutamate 393 together coordinate Mg(2+). Serine 414 contributes to the substrate binding site.

Belongs to the ketol-acid reductoisomerase family. Mg(2+) is required as a cofactor.

It carries out the reaction (2R)-2,3-dihydroxy-3-methylbutanoate + NADP(+) = (2S)-2-acetolactate + NADPH + H(+). It catalyses the reaction (2R,3R)-2,3-dihydroxy-3-methylpentanoate + NADP(+) = (S)-2-ethyl-2-hydroxy-3-oxobutanoate + NADPH + H(+). It participates in amino-acid biosynthesis; L-isoleucine biosynthesis; L-isoleucine from 2-oxobutanoate: step 2/4. Its pathway is amino-acid biosynthesis; L-valine biosynthesis; L-valine from pyruvate: step 2/4. Functionally, involved in the biosynthesis of branched-chain amino acids (BCAA). Catalyzes an alkyl-migration followed by a ketol-acid reduction of (S)-2-acetolactate (S2AL) to yield (R)-2,3-dihydroxy-isovalerate. In the isomerase reaction, S2AL is rearranged via a Mg-dependent methyl migration to produce 3-hydroxy-3-methyl-2-ketobutyrate (HMKB). In the reductase reaction, this 2-ketoacid undergoes a metal-dependent reduction by NADPH to yield (R)-2,3-dihydroxy-isovalerate. The chain is Ketol-acid reductoisomerase (NADP(+)) from Escherichia fergusonii (strain ATCC 35469 / DSM 13698 / CCUG 18766 / IAM 14443 / JCM 21226 / LMG 7866 / NBRC 102419 / NCTC 12128 / CDC 0568-73).